A 142-amino-acid polypeptide reads, in one-letter code: Boophilin-G2 (142 aa).

The N-terminal stretch at 1 to 15 (MKYLILLAVLGTAFA) is a signal peptide. At Q16 the chain carries Pyrrolidone carboxylic acid. 2 consecutive BPTI/Kunitz inhibitor domains span residues 21–71 (CRLP…QKAC) and 89–139 (CEPA…ELVC). Cystine bridges form between C21-C71, C30-C54, C46-C67, C89-C139, C98-C122, and C114-C135.

Interacts with host thrombin and trypsin. Post-translationally, the N-terminus is blocked. In terms of tissue distribution, expressed in the midgut.

The protein localises to the secreted. Midgut thrombin inhibitor that plays a major role in keeping the midgut microenvironment at low hemostatic and inflammatory tonus. Also inhibits FXIa (F11), kallikrein (KLK1), neutrophil elastase (ELANE) and cathepsin G (CTSG), which play a role in the contact pathway of the coagulation cascade. Also abrogates platelet aggregation by cathepsin G and plasmin, and attenuates tissue factor (F3) pathway inhibitor cleavage by elastase. In vivo, inhibits thrombosis and promotes bleeding in mice. This chain is Boophilin-G2, found in Rhipicephalus microplus (Cattle tick).